A 72-amino-acid chain; its full sequence is Gene 42 protein (72 aa).

This Mycobacterium phage L5 (Mycobacteriophage L5) protein is Gene 42 protein (42).